The following is a 388-amino-acid chain: Alanine racemase 3 (388 aa).

Lys-41 (proton acceptor; specific for D-alanine) is an active-site residue. An N6-(pyridoxal phosphate)lysine modification is found at Lys-41. Arg-135 serves as a coordination point for substrate. Catalysis depends on Tyr-256, which acts as the Proton acceptor; specific for L-alanine. Met-304 is a binding site for substrate.

This sequence belongs to the alanine racemase family. Pyridoxal 5'-phosphate is required as a cofactor.

It catalyses the reaction L-alanine = D-alanine. It functions in the pathway amino-acid biosynthesis; D-alanine biosynthesis; D-alanine from L-alanine: step 1/1. Catalyzes the interconversion of L-alanine and D-alanine. May also act on other amino acids. The protein is Alanine racemase 3 (alr3) of Mesorhizobium japonicum (strain LMG 29417 / CECT 9101 / MAFF 303099) (Mesorhizobium loti (strain MAFF 303099)).